Reading from the N-terminus, the 370-residue chain is Ubiquitin-binding protein Rv1468c (370 aa).

The tract at residues 1-72 is UBA; that stretch reads MSFVVANTEF…QVLSAQAAAF (72 aa). In terms of domain architecture, PE spans 1–93; that stretch reads MSFVVANTEF…AQAYAAAEAT (93 aa).

Belongs to the mycobacterial PE family. PGRS subfamily. As to quaternary structure, interacts directly with host polyubiquitin in a UBA-dependent manner.

The protein localises to the secreted. It is found in the cell wall. It localises to the cell surface. Mediates direct binding of host ubiquitin (Ub) to the mycobacterial surface, which triggers host xenophagy. Interaction between Rv1468c and ubiquitin recruits autophagy receptor p62 to deliver mycobacteria into LC3-associated autophagosomes. It could be a viable evolutionary strategy adopted by M.tuberculosis to maintain long-term intracellular survival through self-controlling its intracellular bacterial loads to avoid excessive host inflammatory immune responses. This Mycobacterium tuberculosis (strain ATCC 25618 / H37Rv) protein is Ubiquitin-binding protein Rv1468c.